Here is a 531-residue protein sequence, read N- to C-terminus: High affinity cysteine transporter (531 aa).

Residues 1-54 (MSKVDVKIGADSISSSDEILVPSRLADVTLAFMEENDAAVPEITPEQEKKLKRK) are Cytoplasmic-facing. The helical transmembrane segment at 55-75 (LFLTIFTFVSAINLLLYMDKA) threads the bilayer. Residues 76 to 97 (TLSYDSILGFFEDTGLTQNTYN) are Lumenal-facing. Residues 98 to 118 (TVNTLFYVGFAIGQFPGQYLA) form a helical membrane-spanning segment. At 119–120 (QK) the chain is on the cytoplasmic side. A helical transmembrane segment spans residues 121–141 (LPLGKFLGGLLATWTILIFLS). Topologically, residues 142 to 154 (CTAYNFSGVVALR) are lumenal. The N-linked (GlcNAc...) asparagine glycan is linked to Asn-146. A helical membrane pass occupies residues 155–175 (FFLGLTESVVIPILITTMGMF). Over 176–186 (FDASERAAAQP) the chain is Cytoplasmic. Residues 187–207 (FFFAACMGSPIPTGFIAYGVL) form a helical membrane-spanning segment. Residues 208 to 218 (HITNPSISLWK) lie on the Lumenal side of the membrane. The helical transmembrane segment at 219–239 (IFTIIIGGLTFIMTVVVILWF) threads the bilayer. Over 240 to 285 (PNNPADVKFFSIQERVWIIRRVQASTGSSIEQKVFKKSQFREAMKD) the chain is Cytoplasmic. Residues 286-306 (YITWLFGLFFLLQQLANNLPY) traverse the membrane as a helical segment. The Lumenal segment spans residues 307 to 324 (QQNLLFEGMGGVDALGST). A helical transmembrane segment spans residues 325–345 (LVSVAGAGFAVVCAFIATLML). Residues 346–352 (AKWKNIS) are Cytoplasmic-facing. Residues 353–373 (ALTAIFWTLPALVGSIAAAAL) form a helical membrane-spanning segment. The Lumenal portion of the chain corresponds to 374 to 378 (PWDNK). A helical transmembrane segment spans residues 379-399 (IGILANICMAGQIFGIPFIIA). At 400 to 413 (LSWASSSASGYTKK) the chain is on the cytoplasmic side. A helical membrane pass occupies residues 414–436 (LTRSSVSLFAMGIANIISPQIWR). Residues 437 to 447 (EKDSPRFLPAW) lie on the Lumenal side of the membrane. A helical transmembrane segment spans residues 448 to 468 (IVQIVLSFSLAPAILLLIHFI). Residues 469-498 (LKRRNNQRLKNYDENLQNYLDRIQLIESEN) adopt a coiled-coil conformation. Over 469 to 531 (LKRRNNQRLK…LENETFIYPL (63 aa)) the chain is Cytoplasmic. Phosphoserine is present on residues Ser-500 and Ser-501.

This sequence belongs to the major facilitator superfamily. Allantoate permease family.

The protein localises to the cell membrane. It is found in the endoplasmic reticulum membrane. High affinity cysteine-specific transporter. Major contributor to cysteine transport when cysteine, at low concentrations, is provided as the sole sulfur source. This is High affinity cysteine transporter (YCT1) from Saccharomyces cerevisiae (strain ATCC 204508 / S288c) (Baker's yeast).